Here is a 622-residue protein sequence, read N- to C-terminus: Probable ATP-dependent RNA helicase DDX41 (622 aa).

Over residues 1 to 15 (MEDSEPERKRARADE) the composition is skewed to basic and acidic residues. 2 disordered regions span residues 1–39 (MEDSEPERKRARADEATAGGSRSEDEDEDDEDYVPYVPL) and 51–84 (LQRRRKGATEEEQQDSGSEPRGDEDDIPLGPQSN). Serine 4 bears the Phosphoserine mark. Lysine 9 bears the N6-acetyllysine mark. Residue lysine 9 forms a Glycyl lysine isopeptide (Lys-Gly) (interchain with G-Cter in ubiquitin) linkage. Phosphoserine occurs at positions 21 and 23. Acidic residues predominate over residues 24–33 (EDEDEDDEDY). A Phosphotyrosine modification is found at tyrosine 33. Lysine 115 is covalently cross-linked (Glycyl lysine isopeptide (Lys-Gly) (interchain with G-Cter in ubiquitin)). The short motif at 181–209 (KSFKEMKFPAAILRGLKKKGILHPTPIQI) is the Q motif element. Residues 212-396 (IPTILSGRDM…KSALVKPVTI (185 aa)) form the Helicase ATP-binding domain. Position 225 to 232 (225 to 232 (AFTGSGKT)) interacts with ATP. A DEAD box motif is present at residues 344-347 (DEAD). Residues 407–567 (DVIQEVEYVK…KVPPVLQVLH (161 aa)) enclose the Helicase C-terminal domain. Tyrosine 414 is modified (phosphotyrosine). Residues lysine 416 and lysine 442 each participate in a glycyl lysine isopeptide (Lys-Gly) (interchain with G-Cter in SUMO2) cross-link. Residues 580 to 597 (RGCAFCGGLGHRITDCPK) form a CCHC-type zinc finger.

It belongs to the DEAD box helicase family. DDX41 subfamily. As to quaternary structure, identified in the spliceosome C complex. Interacts with ERCC6. Interacts with FAM50A. Interacts with STING1. Interacts with CGAS. Interacts with several spliceosomes components such as PRP19 or CDC5L. Post-translationally, acetylation at Lys-9 regulates the nuclear/cytoplasmic localization. In terms of processing, phosphorylated by BTK; phosphorylation induces binding to dsDNA and STING1. 'Lys-48'-linked ubiquitinated and degraded by TRIM21 leading to negative regulation of the innate immune response to intracellular dsDNA.

It is found in the nucleus. It localises to the cytoplasm. It catalyses the reaction ATP + H2O = ADP + phosphate + H(+). Its function is as follows. Multifunctional protein that participates in many aspects of cellular RNA metabolism. Plays pivotal roles in innate immune sensing and hematopoietic homeostasis. Recognizes foreign or self-nucleic acids generated during microbial infection, thereby initiating anti-pathogen responses. Mechanistically, phosphorylation by BTK allows binding to dsDNA leading to interaction with STING1. Modulates the homeostasis of dsDNA through its ATP-dependent DNA-unwinding activity and ATP-independent strand-annealing activity. In turn, induces STING1-mediated type I interferon and cytokine responses to DNA and DNA viruses. During murine leukemia virus infection, primarily senses the DNA/RNA hybrid generated at the first step of reverse transcription, while cGAS recognizes dsDNA generated at the next step and both are needed for the antiretroviral innate immune response. Selectively modulates the transcription of certain immunity-associated genes by regulating their alternative splicing. Binds to RNA (R)-loops, structures consisting of DNA/RNA hybrids and a displaced strand of DNA that occur during transcription, and prevents their accumulation, thereby maintaining genome stability. Also participates in pre-mRNA splicing, translational regulation and snoRNA processing, which is essential for ribosome biogenesis. The protein is Probable ATP-dependent RNA helicase DDX41 (Ddx41) of Mus musculus (Mouse).